Reading from the N-terminus, the 598-residue chain is Aspartate--tRNA(Asp/Asn) ligase (598 aa).

Glu-174 is an L-aspartate binding site. Residues 198–201 (QQLK) are aspartate. Arg-220 serves as a coordination point for L-aspartate. ATP contacts are provided by residues 220-222 (RDE) and Gln-229. His-458 lines the L-aspartate pocket. An ATP-binding site is contributed by Glu-492. Residue Arg-499 coordinates L-aspartate. An ATP-binding site is contributed by 544–547 (GIDR).

The protein belongs to the class-II aminoacyl-tRNA synthetase family. Type 1 subfamily. In terms of assembly, homodimer.

It localises to the cytoplasm. It carries out the reaction tRNA(Asx) + L-aspartate + ATP = L-aspartyl-tRNA(Asx) + AMP + diphosphate. Its function is as follows. Aspartyl-tRNA synthetase with relaxed tRNA specificity since it is able to aspartylate not only its cognate tRNA(Asp) but also tRNA(Asn). Reaction proceeds in two steps: L-aspartate is first activated by ATP to form Asp-AMP and then transferred to the acceptor end of tRNA(Asp/Asn). This Dehalococcoides mccartyi (strain CBDB1) protein is Aspartate--tRNA(Asp/Asn) ligase.